The chain runs to 779 residues: Ribosome-releasing factor 2, mitochondrial (779 aa).

The tr-type G domain maps to 68–353 (AKIRNIGIMA…AVTTYLPSPE (286 aa)). Residues 77 to 84 (AHIDAGKT), 141 to 145 (DTPGH), and 195 to 198 (NKMD) each bind GTP.

This sequence belongs to the TRAFAC class translation factor GTPase superfamily. Classic translation factor GTPase family. EF-G/EF-2 subfamily.

The protein localises to the mitochondrion. The enzyme catalyses GTP + H2O = GDP + phosphate + H(+). Mitochondrial GTPase that mediates the disassembly of ribosomes from messenger RNA at the termination of mitochondrial protein biosynthesis. Acts in collaboration with MRRF. GTP hydrolysis follows the ribosome disassembly and probably occurs on the ribosome large subunit. Not involved in the GTP-dependent ribosomal translocation step during translation elongation. This is Ribosome-releasing factor 2, mitochondrial (Gfm2) from Mus musculus (Mouse).